Here is a 318-residue protein sequence, read N- to C-terminus: Mitochondrial thiamine pyrophosphate carrier (318 aa).

Solcar repeat units follow at residues 13–106 (NSKL…LTEL), 116–202 (HQFS…LKRA), and 214–309 (TGNL…FCNL). Transmembrane regions (helical) follow at residues 19-39 (AVAG…LDVI), 87-107 (ILSI…TELL), 122-142 (FVCG…VDVL), 173-193 (VFYK…GLQF), 220-240 (LLCG…LDLF), and 293-313 (ALST…FHCI).

This sequence belongs to the mitochondrial carrier (TC 2.A.29) family.

Its subcellular location is the mitochondrion membrane. It catalyses the reaction thiamine phosphate(out) + thiamine diphosphate(in) = thiamine phosphate(in) + thiamine diphosphate(out). Its function is as follows. Mitochondrial transporter mediating uptake of thiamine diphosphate into mitochondria. It is not clear if the antiporter activity is affected by the membrane potential or by the proton electrochemical gradient. This Rattus norvegicus (Rat) protein is Mitochondrial thiamine pyrophosphate carrier (Slc25a19).